Consider the following 406-residue polypeptide: Plasma serine protease inhibitor (406 aa).

Positions 1–19 (MQLFLLLCLVLLSPQGASL) are cleaved as a signal peptide. Residues 20-25 (HRHHPR) constitute a propeptide, removed in mature form. Threonine 39 carries an O-linked (GalNAc...) threonine glycan. Asparagine 249, asparagine 262, and asparagine 338 each carry an N-linked (GlcNAc...) asparagine glycan.

It belongs to the serpin family. Forms protease inhibiting heterodimers in extracellular body fluids with serine proteases such as activated protein C/coagulation factor V/F5, acrosin/ACR, chymotrypsinogen B/CTRB1, prothrombin/F2, factor Xa/F10, factor XI/F11, kallikrein/KLKB1, tissue kallikrein, trypsin/PRSS1, prostate specific antigen/KLK3, tissue plasminogen activator/PLAT and urinary plasminogen activator/PLAU. Forms membrane-anchored serine proteases inhibiting heterodimers with TMPRSS7 and TMPRSS11E. Interacts with SEMG2. Post-translationally, N- and O-glycosylated. N-glycosylation consists of a mixture of sialylated bi- (including sialyl-Lewis X epitopes), tri- and tetra-antennary complex-type chains; affects the maximal heparin- and thrombomodulin-enhanced rates of thrombin inhibition. O-glycosylated with core 1 or possibly core 8 glycans. Further modified with 2 sialic acid residues. Proteolytically cleaved. Inhibition of proteases is accompanied by formation of a stable enzyme-inhibitor complex and by degradation of the serpin to lower molecular weight derivatives. Proteolytically cleaved at the N-terminus; inhibits slightly the heparin- and thrombomodulin-enhanced rates of thrombin inhibition. In terms of tissue distribution, predominantly expressed in the epithelium of seminal vesicles. Expressed in the proximal tubular epithelium of the kidney. Expressed in the superficial and more differentiated epidermal keratinocytes of the skin. Expressed in megakaryocytes and platelets. Expressed poorly in kidney tumor cells compared to non tumor kidney tissues. Expressed in spermatozoa. Present in very high concentration in seminal plasma. Present in high concentration in plasma, synovial and Graaf follicle fluids. Present in low concentration in breast milk and in amniotic fluids. Present in very low concentration in urine, cerebrospinal fluids, saliva and tears (at protein level). Strongly expressed in liver. Expressed in kidney, spleen, pancreas, skeletal muscle, heart, testes, ovary, interstitial Leydig cells, epididymal glands, seminal vesicles and prostate.

The protein resides in the secreted. It is found in the extracellular space. Its inhibitory activity is greatly enhanced in the presence of glycosaminoglycans, heparin, thrombomodulin and phospholipids vesicles. Functionally, heparin-dependent serine protease inhibitor acting in body fluids and secretions. Inactivates serine proteases by binding irreversibly to their serine activation site. Involved in the regulation of intravascular and extravascular proteolytic activities. Plays hemostatic roles in the blood plasma. Acts as a procoagulant and pro-inflammatory factor by inhibiting the anticoagulant activated protein C factor as well as the generation of activated protein C factor by the thrombin/thrombomodulin complex. Acts as an anticoagulant factor by inhibiting blood coagulation factors like prothrombin, factor XI, factor Xa, plasma kallikrein and fibrinolytic enzymes such as tissue- and urinary-type plasminogen activators. In seminal plasma, inactivates several serine proteases implicated in the reproductive system. Inhibits the serpin acrosin; indirectly protects component of the male genital tract from being degraded by excessive released acrosin. Inhibits tissue- and urinary-type plasminogen activator, prostate-specific antigen and kallikrein activities; has a control on the sperm motility and fertilization. Inhibits the activated protein C-catalyzed degradation of SEMG1 and SEMG2; regulates the degradation of semenogelin during the process of transfer of spermatozoa from the male reproductive tract into the female tract. In urine, inhibits urinary-type plasminogen activator and kallikrein activities. Inactivates membrane-anchored serine proteases activities such as MPRSS7 and TMPRSS11E. Inhibits urinary-type plasminogen activator-dependent tumor cell invasion and metastasis. May also play a non-inhibitory role in seminal plasma and urine as a hydrophobic hormone carrier by its binding to retinoic acid. This is Plasma serine protease inhibitor (SERPINA5) from Homo sapiens (Human).